The sequence spans 383 residues: uncharacterized protein (383 aa).

To V.anguillarum virulence protein VirA.

Could have an enzymatic function. This is an uncharacterized protein from Sinorhizobium fredii (strain NBRC 101917 / NGR234).